We begin with the raw amino-acid sequence, 456 residues long: Sulfate adenylyltransferase (456 aa).

It belongs to the sulfate adenylyltransferase family.

It carries out the reaction sulfate + ATP + H(+) = adenosine 5'-phosphosulfate + diphosphate. Its pathway is sulfur metabolism; hydrogen sulfide biosynthesis; sulfite from sulfate: step 1/3. This chain is Sulfate adenylyltransferase (sat), found in Archaeoglobus fulgidus (strain ATCC 49558 / DSM 4304 / JCM 9628 / NBRC 100126 / VC-16).